The chain runs to 392 residues: 4-hydroxybenzoate polyprenyltransferase, mitochondrial (392 aa).

Residues 1-22 (MYALRHLRLQSARHFRSSYAAA) constitute a mitochondrion transit peptide. The next 9 membrane-spanning stretches (helical) occupy residues 90 to 110 (IGTYLLFWPCAWSIALSADAG), 115 to 135 (LTMLGLFGTGALIMRGAGCTI), 163 to 183 (FDAIVFLSAQLSLGLLVLVQL), 184 to 204 (NWQSILLGASSLGLVITYPLM), 207 to 227 (VTYWPQLVLGMAFNWGALLGW), 236 to 256 (LAACLPLYLSGVCWTIVYDTI), 283 to 303 (VWLSGFTAAMLTGLSAAGWAC), 307 to 327 (VPYYAAVGVVGAHLVQQIYSL), and 339 to 359 (FISNHQVGLILFLGIVLGTLL). The tract at residues 365–392 (KKQRQSSLTTSTASSYVPALPQKPEVLS) is disordered. Over residues 369–379 (QSSLTTSTASS) the composition is skewed to polar residues.

The protein belongs to the UbiA prenyltransferase family. Mg(2+) is required as a cofactor.

The protein localises to the mitochondrion inner membrane. The enzyme catalyses an all-trans-polyprenyl diphosphate + 4-hydroxybenzoate = a 4-hydroxy-3-(all-trans-polyprenyl)benzoate + diphosphate. It functions in the pathway cofactor biosynthesis; ubiquinone biosynthesis. Its function is as follows. Catalyzes the prenylation of para-hydroxybenzoate (PHB) with an all-trans polyprenyl group. Mediates the second step in the final reaction sequence of coenzyme Q (CoQ) biosynthesis, which is the condensation of the polyisoprenoid side chain with PHB, generating the first membrane-bound Q intermediate. This is 4-hydroxybenzoate polyprenyltransferase, mitochondrial from Drosophila melanogaster (Fruit fly).